Reading from the N-terminus, the 490-residue chain is GTPase Der (490 aa).

2 consecutive EngA-type G domains span residues 3–166 and 203–376; these read PVVA…MDDV and IKLA…DSST. GTP contacts are provided by residues 9–16, 56–60, 118–121, 209–216, 256–260, and 321–324; these read GRPNVGKS, DTGGI, NKTD, DTAGV, and NKWD. Residues 377–461 enclose the KH-like domain; that stretch reads RRVSTAMLTR…PIRIQFKEGE (85 aa).

It belongs to the TRAFAC class TrmE-Era-EngA-EngB-Septin-like GTPase superfamily. EngA (Der) GTPase family. As to quaternary structure, associates with the 50S ribosomal subunit.

GTPase that plays an essential role in the late steps of ribosome biogenesis. The protein is GTPase Der of Salmonella enteritidis PT4 (strain P125109).